The primary structure comprises 199 residues: Protein ZNRD2 (199 aa).

Residue Ala-2 is modified to N-acetylalanine. Residues Cys-53, Cys-56, Cys-70, and Cys-73 each coordinate Zn(2+). The residue at position 94 (Ser-94) is a Phosphoserine. The tract at residues 100–125 (QLASASELPLGSRPAPQPPVPRPEHC) is disordered. The Nuclear export signal signature appears at 173–194 (SLETSIQLCGLIRACAEALRSL).

As to quaternary structure, homodimer. The cofactor is Zn(2+).

The protein resides in the cytoplasm. Functionally, might play a role in mitosis. Antigenic molecule. Could be a centromere-associated protein. May induce anti-centromere antibodies. The protein is Protein ZNRD2 of Homo sapiens (Human).